Reading from the N-terminus, the 216-residue chain is MKIKEFMSNKKGASGIGTLIVFIAMVLVAAVAASVLINTSGFLQQKASTTGKESTEQVASGLQISQVMGMHNNSNINKTAIYISPNAGSSAIDLSQAVIMLSDGSNKRVYKYNESSYKDLTNGGDIFDNANVEWIKATATKFGIVVIQDADESCTAANPVINKGDLVAITLNTTSFSTTPRTSITGTVQPEFGAPGIISFTTPATYLNDSKVVQLQ.

Positions 1–12 are excised as a propeptide; sequence MKIKEFMSNKKG. Residues Asn-38, Asn-72, Asn-77, Asn-113, Asn-172, and Asn-208 are each glycosylated (N-linked (GlcNAc...) asparagine).

It belongs to the archaeal flagellin family. In terms of processing, N-linked glycans consist of the 779 Da trisaccharide beta-ManNAc(Thr)-(1-4)-beta-GlcNAc3NAcA-(1-3)-beta-GlcNAc.

The protein localises to the archaeal flagellum. Its function is as follows. Flagellin is the subunit protein which polymerizes to form the filaments of archaeal flagella. The sequence is that of Flagellin B2 (flaB2) from Methanococcus voltae.